The sequence spans 679 residues: Penicillin-binding protein 1A (679 aa).

Basic residues predominate over residues methionine 1–asparagine 14. The interval methionine 1 to asparagine 20 is disordered. Residues methionine 1–tryptophan 30 are Cytoplasmic-facing. Residues phenylalanine 31–leucine 51 form a helical; Signal-anchor for type II membrane protein membrane-spanning segment. The Extracellular segment spans residues serine 52–glutamate 679. The transglycosylase stretch occupies residues serine 72–alanine 244. The Proton donor; for transglycosylase activity role is filled by glutamate 111. The interval alanine 378 to glycine 663 is transpeptidase. The Acyl-ester intermediate; for transpeptidase activity role is filled by serine 417.

This sequence in the N-terminal section; belongs to the glycosyltransferase 51 family. It in the C-terminal section; belongs to the transpeptidase family.

The protein localises to the cell membrane. It carries out the reaction [GlcNAc-(1-&gt;4)-Mur2Ac(oyl-L-Ala-gamma-D-Glu-L-Lys-D-Ala-D-Ala)](n)-di-trans,octa-cis-undecaprenyl diphosphate + beta-D-GlcNAc-(1-&gt;4)-Mur2Ac(oyl-L-Ala-gamma-D-Glu-L-Lys-D-Ala-D-Ala)-di-trans,octa-cis-undecaprenyl diphosphate = [GlcNAc-(1-&gt;4)-Mur2Ac(oyl-L-Ala-gamma-D-Glu-L-Lys-D-Ala-D-Ala)](n+1)-di-trans,octa-cis-undecaprenyl diphosphate + di-trans,octa-cis-undecaprenyl diphosphate + H(+). The catalysed reaction is Preferential cleavage: (Ac)2-L-Lys-D-Ala-|-D-Ala. Also transpeptidation of peptidyl-alanyl moieties that are N-acyl substituents of D-alanine.. It participates in cell wall biogenesis; peptidoglycan biosynthesis. Cell wall formation. Synthesis of cross-linked peptidoglycan from the lipid intermediates. The enzyme has a penicillin-insensitive transglycosylase N-terminal domain (formation of linear glycan strands) and a penicillin-sensitive transpeptidase C-terminal domain (cross-linking of the peptide subunits). This Clostridium perfringens (strain 13 / Type A) protein is Penicillin-binding protein 1A (pbpA).